We begin with the raw amino-acid sequence, 256 residues long: Stanniocalcin (256 aa).

A signal peptide spans 1–18; sequence MLAKFGLCAVFLVLGTAA. A propeptide spanning residues 19-33 is cleaved from the precursor; that stretch reads TFDTDPEEASPRRAR. N-linked (GlcNAc...) asparagine glycosylation occurs at asparagine 62. The disordered stretch occupies residues 204-241; it reads QGSNQGPNSAPAGWRWPMGSPPSFKIQPSMRGRDPTHL.

It belongs to the stanniocalcin family. As to quaternary structure, homodimer; disulfide-linked. Produced and secreted by the corpuscles of Stannius.

Its subcellular location is the secreted. Its primary function is the prevention of hypercalcemia. Upon release into the circulation, it lowers calcium transport by the gills, thereby reducing its rate of influx from the environment into the extracellular compartment. STC also stimulates phosphate reabsorption by renal proximal tubules. The consequence of this action is increased levels of plasma phosphate, which combines with excess calcium and promotes its disposal into bone and scales. The sequence is that of Stanniocalcin (stc) from Oncorhynchus mykiss (Rainbow trout).